The chain runs to 275 residues: Dermonecrotic toxin LhSicTox-alphaVI1ii (275 aa).

His5 is an active-site residue. Glu25 and Asp27 together coordinate Mg(2+). The active-site Nucleophile is the His41. 2 cysteine pairs are disulfide-bonded: Cys45/Cys51 and Cys47/Cys192. Asp85 is a Mg(2+) binding site.

This sequence belongs to the arthropod phospholipase D family. Class II subfamily. Mg(2+) serves as cofactor. Expressed by the venom gland.

The protein localises to the secreted. The catalysed reaction is an N-(acyl)-sphingosylphosphocholine = an N-(acyl)-sphingosyl-1,3-cyclic phosphate + choline. The enzyme catalyses an N-(acyl)-sphingosylphosphoethanolamine = an N-(acyl)-sphingosyl-1,3-cyclic phosphate + ethanolamine. It catalyses the reaction a 1-acyl-sn-glycero-3-phosphocholine = a 1-acyl-sn-glycero-2,3-cyclic phosphate + choline. It carries out the reaction a 1-acyl-sn-glycero-3-phosphoethanolamine = a 1-acyl-sn-glycero-2,3-cyclic phosphate + ethanolamine. Dermonecrotic toxins cleave the phosphodiester linkage between the phosphate and headgroup of certain phospholipids (sphingolipid and lysolipid substrates), forming an alcohol (often choline) and a cyclic phosphate. This toxin acts on sphingomyelin (SM). It may also act on ceramide phosphoethanolamine (CPE), lysophosphatidylcholine (LPC) and lysophosphatidylethanolamine (LPE), but not on lysophosphatidylserine (LPS), and lysophosphatidylglycerol (LPG). It acts by transphosphatidylation, releasing exclusively cyclic phosphate products as second products. Induces dermonecrosis, hemolysis, increased vascular permeability, edema, inflammatory response, and platelet aggregation. The chain is Dermonecrotic toxin LhSicTox-alphaVI1ii from Loxosceles hirsuta (Recluse spider).